We begin with the raw amino-acid sequence, 92 residues long: MKFEAVVRTELGKGASRRLRHAGKFPAVVYGGEEAAVAIVLNHDDIVNQMDKPEFYEGIVLVIDGAEVKVKPQDVQRHAFKPKVEHMDFIRI.

Belongs to the bacterial ribosomal protein bL25 family. In terms of assembly, part of the 50S ribosomal subunit; part of the 5S rRNA/L5/L18/L25 subcomplex. Contacts the 5S rRNA. Binds to the 5S rRNA independently of L5 and L18.

This is one of the proteins that binds to the 5S RNA in the ribosome where it forms part of the central protuberance. The sequence is that of Large ribosomal subunit protein bL25 from Vibrio campbellii (strain ATCC BAA-1116).